A 533-amino-acid polypeptide reads, in one-letter code: Frizzled/smoothened-like sans CRD protein H (533 aa).

An N-terminal signal peptide occupies residues 1 to 21; that stretch reads MFIKFYFFIIFLILNFKNNYA. Topologically, residues 22–103 are extracellular; it reads SPTLLDSVLS…GDWTTMMDMS (82 aa). N76 carries N-linked (GlcNAc...) asparagine glycosylation. The helical transmembrane segment at 104–124 threads the bilayer; sequence LIVATISFFASIFLILTYSPL. The Cytoplasmic portion of the chain corresponds to 125–134; sequence MNPSYNNRHT. A helical transmembrane segment spans residues 135–155; the sequence is IGILSMSFGIFLIMFTDMYNL. Topologically, residues 156–177 are extracellular; sequence KKRFTLGCPSETRYAIQNDADC. Residues 178 to 198 form a helical membrane-spanning segment; sequence LITGLIFQFGCVSAVFFWTAL. Over 199–216 the chain is Cytoplasmic; sequence SLDLYFQITNRNISRKYD. A helical membrane pass occupies residues 217-237; that stretch reads LYYFIGVNLISLIFTFVPVIS. The Extracellular segment spans residues 238–259; that stretch reads KSYGYGDFALGCWILDFNYALG. The chain crosses the membrane as a helical span at residues 260-280; that stretch reads CFWIPLSVCLIFSTVVVLMIL. Over 281 to 302 the chain is Cytoplasmic; the sequence is YEVYKIYKASNQKTSLKGHIKP. The chain crosses the membrane as a helical span at residues 303 to 323; it reads LLCLISNCFEFFYVFGYSLYL. Topologically, residues 324 to 360 are extracellular; sequence ATKLTELHDNMDAYIKCLFLNSQNDPDSYTCPDHRLK. Residues 361–381 traverse the membrane as a helical segment; that stretch reads LGPQFLFFLSLRLLGVSGIVF. At 382 to 533 the chain is on the cytoplasmic side; that stretch reads YGTNSKVRKI…LTNINTIDNV (152 aa). The segment at 454–533 is disordered; sequence IIVTPGGDDD…LTNINTIDNV (80 aa). Residues 466-518 show a composition bias toward low complexity; the sequence is NNNNNNNNNNNNNNNNNNNNNNNNNNNNNNNNNNNNNNNNNNNNNSNENNENN. Residues 501–528 are a coiled coil; it reads NNNNNNNNNNSNENNENNTQEIELTNIN. The span at 519 to 533 shows a compositional bias: polar residues; the sequence is TQEIELTNINTIDNV.

This sequence belongs to the G-protein coupled receptor Fz/Smo family.

The protein resides in the membrane. This is Frizzled/smoothened-like sans CRD protein H (fscH) from Dictyostelium discoideum (Social amoeba).